The primary structure comprises 79 residues: Sec-independent protein translocase protein TatA (79 aa).

A helical transmembrane segment spans residues 1-21; that stretch reads MGGISIWQLLIILVIVVLLFG. Residues 45–79 are disordered; the sequence is EEEKDADFEQKKQVEEKSAAEPVSTETQSDVKEKS. Basic and acidic residues predominate over residues 51 to 63; that stretch reads DFEQKKQVEEKSA.

This sequence belongs to the TatA/E family. As to quaternary structure, the Tat system comprises two distinct complexes: a TatABC complex, containing multiple copies of TatA, TatB and TatC subunits, and a separate TatA complex, containing only TatA subunits. Substrates initially bind to the TatABC complex, which probably triggers association of the separate TatA complex to form the active translocon.

The protein localises to the cell inner membrane. Its function is as follows. Part of the twin-arginine translocation (Tat) system that transports large folded proteins containing a characteristic twin-arginine motif in their signal peptide across membranes. TatA could form the protein-conducting channel of the Tat system. In Alteromonas mediterranea (strain DSM 17117 / CIP 110805 / LMG 28347 / Deep ecotype), this protein is Sec-independent protein translocase protein TatA.